A 173-amino-acid polypeptide reads, in one-letter code: uncharacterized protein (173 aa).

The protein belongs to the M.jannaschii MJ0150/MJ0739/MJ0745/MJ1460/MJ1642 family.

This is an uncharacterized protein from Methanocaldococcus jannaschii (strain ATCC 43067 / DSM 2661 / JAL-1 / JCM 10045 / NBRC 100440) (Methanococcus jannaschii).